The primary structure comprises 391 residues: Apolipoprotein A-IV (391 aa).

The first 20 residues, Met1 to Ala20, serve as a signal peptide directing secretion. 13 repeat units span residues Asp33 to Val54, Thr60 to Val81, Pro82 to Gln103, Pro115 to Arg136, Pro137 to Thr158, Pro159 to Val180, Pro181 to Thr202, Pro203 to Ala224, Pro225 to Lys246, Lys247 to Ala268, Pro269 to Gln286, Lys287 to Glu308, and Pro309 to Gly330. Residues Asp33–Gly330 are 13 X 22 AA approximate tandem repeats. Ser333 carries the post-translational modification Phosphoserine. A disordered region spans residues Phe354–Ser391. Positions Pro371–Ser391 are enriched in low complexity.

It belongs to the apolipoprotein A1/A4/E family. Homodimer. As to expression, secreted in plasma.

The protein localises to the secreted. Functionally, may have a role in chylomicrons and VLDL secretion and catabolism. Required for efficient activation of lipoprotein lipase by ApoC-II; potent activator of LCAT. Apoa-IV is a major component of HDL and chylomicrons. This chain is Apolipoprotein A-IV (Apoa4), found in Rattus norvegicus (Rat).